Consider the following 601-residue polypeptide: Arginine--tRNA ligase (601 aa).

The 'HIGH' region motif lies at 135-145; that stretch reads ANPTGPLHLGH.

Belongs to the class-I aminoacyl-tRNA synthetase family. In terms of assembly, monomer.

The protein localises to the cytoplasm. It carries out the reaction tRNA(Arg) + L-arginine + ATP = L-arginyl-tRNA(Arg) + AMP + diphosphate. The protein is Arginine--tRNA ligase of Gloeobacter violaceus (strain ATCC 29082 / PCC 7421).